A 248-amino-acid polypeptide reads, in one-letter code: Ribonuclease PH (248 aa).

Phosphate contacts are provided by residues R86 and 124–126 (GTR).

This sequence belongs to the RNase PH family. Homohexameric ring arranged as a trimer of dimers.

It catalyses the reaction tRNA(n+1) + phosphate = tRNA(n) + a ribonucleoside 5'-diphosphate. In terms of biological role, phosphorolytic 3'-5' exoribonuclease that plays an important role in tRNA 3'-end maturation. Removes nucleotide residues following the 3'-CCA terminus of tRNAs; can also add nucleotides to the ends of RNA molecules by using nucleoside diphosphates as substrates, but this may not be physiologically important. Probably plays a role in initiation of 16S rRNA degradation (leading to ribosome degradation) during starvation. This is Ribonuclease PH from Clostridium perfringens (strain SM101 / Type A).